The following is an 85-amino-acid chain: Small ribosomal subunit protein uS17 (85 aa).

Belongs to the universal ribosomal protein uS17 family. Part of the 30S ribosomal subunit.

In terms of biological role, one of the primary rRNA binding proteins, it binds specifically to the 5'-end of 16S ribosomal RNA. The chain is Small ribosomal subunit protein uS17 from Agathobacter rectalis (strain ATCC 33656 / DSM 3377 / JCM 17463 / KCTC 5835 / VPI 0990) (Eubacterium rectale).